A 78-amino-acid chain; its full sequence is Large ribosomal subunit protein bL28 (78 aa).

This sequence belongs to the bacterial ribosomal protein bL28 family.

This chain is Large ribosomal subunit protein bL28, found in Hamiltonella defensa subsp. Acyrthosiphon pisum (strain 5AT).